A 316-amino-acid chain; its full sequence is MAPENFTRVTEFILTGVSSCPELQIPLFLVFLVLYGLTMAGNLGIITLTSVDSRLQTPMYFFLQHLALINLGNSTVIAPKMLINFLVKKKTTSFYECATQLGGFLFFIVSEVIMLALMAYDRYVAICNPLLYMVVVSRRLCLLLVSLTYLYGFSTAIVVSSYVFSVSYCSSNIINHFYCDNVPLLALSCSDTYLPETVVFISAATNVVGSLIIVLVSYFNIVLSILKICSSEGRKKAFSTCASHMMAVTIFYGTLLFMYVQPRSNHSLDTDDKMASVFYTLVIPMLNPLIYSLRNKDVKTALQRFMTNLCYSFKTM.

Residues 1 to 25 are Extracellular-facing; that stretch reads MAPENFTRVTEFILTGVSSCPELQI. Residue N5 is glycosylated (N-linked (GlcNAc...) asparagine). Residues 26–46 traverse the membrane as a helical segment; the sequence is PLFLVFLVLYGLTMAGNLGII. The Cytoplasmic segment spans residues 47–54; it reads TLTSVDSR. A helical transmembrane segment spans residues 55 to 75; the sequence is LQTPMYFFLQHLALINLGNST. Residues 76-99 lie on the Extracellular side of the membrane; sequence VIAPKMLINFLVKKKTTSFYECAT. C97 and C189 are joined by a disulfide. Residues 100-120 traverse the membrane as a helical segment; the sequence is QLGGFLFFIVSEVIMLALMAY. Residues 121 to 139 lie on the Cytoplasmic side of the membrane; it reads DRYVAICNPLLYMVVVSRR. Residues 140 to 160 form a helical membrane-spanning segment; that stretch reads LCLLLVSLTYLYGFSTAIVVS. At 161–197 the chain is on the extracellular side; the sequence is SYVFSVSYCSSNIINHFYCDNVPLLALSCSDTYLPET. The helical transmembrane segment at 198–217 threads the bilayer; it reads VVFISAATNVVGSLIIVLVS. Over 218–237 the chain is Cytoplasmic; sequence YFNIVLSILKICSSEGRKKA. The helical transmembrane segment at 238-258 threads the bilayer; it reads FSTCASHMMAVTIFYGTLLFM. Topologically, residues 259–272 are extracellular; it reads YVQPRSNHSLDTDD. Residues 273 to 293 traverse the membrane as a helical segment; sequence KMASVFYTLVIPMLNPLIYSL. Topologically, residues 294 to 316 are cytoplasmic; sequence RNKDVKTALQRFMTNLCYSFKTM.

The protein belongs to the G-protein coupled receptor 1 family.

It localises to the cell membrane. Its function is as follows. Odorant receptor. The protein is Olfactory receptor 8J1 (OR8J1) of Homo sapiens (Human).